The chain runs to 201 residues: Small ribosomal subunit protein uS4c (201 aa).

One can recognise an S4 RNA-binding domain in the interval 89 to 150; sequence MRLDNIVFRL…RQKSQAIITK (62 aa).

It belongs to the universal ribosomal protein uS4 family. As to quaternary structure, part of the 30S ribosomal subunit. Contacts protein S5. The interaction surface between S4 and S5 is involved in control of translational fidelity.

The protein resides in the plastid. Its subcellular location is the chloroplast. In terms of biological role, one of the primary rRNA binding proteins, it binds directly to 16S rRNA where it nucleates assembly of the body of the 30S subunit. Its function is as follows. With S5 and S12 plays an important role in translational accuracy. The protein is Small ribosomal subunit protein uS4c (rps4) of Physcomitrium patens (Spreading-leaved earth moss).